Here is a 63-residue protein sequence, read N- to C-terminus: Cytochrome c oxidase subunit 7C, mitochondrial (63 aa).

The transit peptide at 1-16 directs the protein to the mitochondrion; that stretch reads MLGQSIRRFTTSVVRR. The Mitochondrial matrix portion of the chain corresponds to 17–33; it reads SHYEEGPGKNLPFSVEN. Residue lysine 25 is modified to N6-acetyllysine; alternate. Residue lysine 25 is modified to N6-succinyllysine; alternate. A helical transmembrane segment spans residues 34–60; it reads KWRLLLMMTVYFGSGFAAPFFIVRHQL. Residues 61–63 are Mitochondrial intermembrane-facing; that stretch reads LKK.

This sequence belongs to the cytochrome c oxidase VIIc family. In terms of assembly, component of the cytochrome c oxidase (complex IV, CIV), a multisubunit enzyme composed of 14 subunits. The complex is composed of a catalytic core of 3 subunits MT-CO1, MT-CO2 and MT-CO3, encoded in the mitochondrial DNA, and 11 supernumerary subunits COX4I, COX5A, COX5B, COX6A, COX6B, COX6C, COX7A, COX7B, COX7C, COX8 and NDUFA4, which are encoded in the nuclear genome. The complex exists as a monomer or a dimer and forms supercomplexes (SCs) in the inner mitochondrial membrane with NADH-ubiquinone oxidoreductase (complex I, CI) and ubiquinol-cytochrome c oxidoreductase (cytochrome b-c1 complex, complex III, CIII), resulting in different assemblies (supercomplex SCI(1)III(2)IV(1) and megacomplex MCI(2)III(2)IV(2)). Interacts with RAB5IF.

It is found in the mitochondrion inner membrane. It functions in the pathway energy metabolism; oxidative phosphorylation. Its function is as follows. Component of the cytochrome c oxidase, the last enzyme in the mitochondrial electron transport chain which drives oxidative phosphorylation. The respiratory chain contains 3 multisubunit complexes succinate dehydrogenase (complex II, CII), ubiquinol-cytochrome c oxidoreductase (cytochrome b-c1 complex, complex III, CIII) and cytochrome c oxidase (complex IV, CIV), that cooperate to transfer electrons derived from NADH and succinate to molecular oxygen, creating an electrochemical gradient over the inner membrane that drives transmembrane transport and the ATP synthase. Cytochrome c oxidase is the component of the respiratory chain that catalyzes the reduction of oxygen to water. Electrons originating from reduced cytochrome c in the intermembrane space (IMS) are transferred via the dinuclear copper A center (CU(A)) of subunit 2 and heme A of subunit 1 to the active site in subunit 1, a binuclear center (BNC) formed by heme A3 and copper B (CU(B)). The BNC reduces molecular oxygen to 2 water molecules using 4 electrons from cytochrome c in the IMS and 4 protons from the mitochondrial matrix. The chain is Cytochrome c oxidase subunit 7C, mitochondrial (Cox7c) from Rattus norvegicus (Rat).